Here is a 122-residue protein sequence, read N- to C-terminus: Large ribosomal subunit protein uL14 (122 aa).

Belongs to the universal ribosomal protein uL14 family. Part of the 50S ribosomal subunit. Forms a cluster with proteins L3 and L19. In the 70S ribosome, L14 and L19 interact and together make contacts with the 16S rRNA in bridges B5 and B8.

Its function is as follows. Binds to 23S rRNA. Forms part of two intersubunit bridges in the 70S ribosome. The protein is Large ribosomal subunit protein uL14 of Myxococcus xanthus (strain DK1622).